The chain runs to 322 residues: MSQNEQQYLDLAQKILDEGSHKGDRTGTGTRSLFGTQMRFNLAEGFPLLTTKKVFFGLIKSELLWFLRGDNNIRFLLEHNNHIWDEWAFKKWIESDKYTGPDMTNFGLRSQTDENFAKIYKEQKDIFVNNILNDDEFKEEFGYIGNVYGKLWRSWETNSLTAGDETVDQVARLIDQIKETPNSRRLILTAWNAETTPQAPLPSCHVLSQFYVADGKLSLQMYQRSGDFFLGVPFNIASYSLLLHMVAAQTGYEVGEFIHTIGDTHIYNNHVDQITEQLSRPMHKLPKLWLNPEVKSLFDYTMDDIKILDYDSEPAIKAPVAV.

Residues Arg25 and 184 to 185 (RR) each bind dUMP. Cys204 functions as the Nucleophile in the catalytic mechanism. DUMP-binding positions include 224–227 (RSGD), Asn235, and 265–267 (HIY). Asp227 contacts (6R)-5,10-methylene-5,6,7,8-tetrahydrofolate. Position 321 (Ala321) interacts with (6R)-5,10-methylene-5,6,7,8-tetrahydrofolate.

This sequence belongs to the thymidylate synthase family. Bacterial-type ThyA subfamily. As to quaternary structure, homodimer.

The protein resides in the cytoplasm. It catalyses the reaction dUMP + (6R)-5,10-methylene-5,6,7,8-tetrahydrofolate = 7,8-dihydrofolate + dTMP. It participates in pyrimidine metabolism; dTTP biosynthesis. Catalyzes the reductive methylation of 2'-deoxyuridine-5'-monophosphate (dUMP) to 2'-deoxythymidine-5'-monophosphate (dTMP) while utilizing 5,10-methylenetetrahydrofolate (mTHF) as the methyl donor and reductant in the reaction, yielding dihydrofolate (DHF) as a by-product. This enzymatic reaction provides an intracellular de novo source of dTMP, an essential precursor for DNA biosynthesis. The polypeptide is Thymidylate synthase (Leuconostoc mesenteroides subsp. mesenteroides (strain ATCC 8293 / DSM 20343 / BCRC 11652 / CCM 1803 / JCM 6124 / NCDO 523 / NBRC 100496 / NCIMB 8023 / NCTC 12954 / NRRL B-1118 / 37Y)).